Reading from the N-terminus, the 367-residue chain is Phosphoribosylaminoimidazole-succinocarboxamide synthase (367 aa).

Belongs to the SAICAR synthetase family.

It catalyses the reaction 5-amino-1-(5-phospho-D-ribosyl)imidazole-4-carboxylate + L-aspartate + ATP = (2S)-2-[5-amino-1-(5-phospho-beta-D-ribosyl)imidazole-4-carboxamido]succinate + ADP + phosphate + 2 H(+). It functions in the pathway purine metabolism; IMP biosynthesis via de novo pathway; 5-amino-1-(5-phospho-D-ribosyl)imidazole-4-carboxamide from 5-amino-1-(5-phospho-D-ribosyl)imidazole-4-carboxylate: step 1/2. The sequence is that of Phosphoribosylaminoimidazole-succinocarboxamide synthase from Shewanella sp. (strain W3-18-1).